The following is a 354-amino-acid chain: MSRIAVAMSGGVDSSVVAALLQQQGHEVIGITMQLFEPCSSGPGTPAHDGAQVAAQLGIPHHLLRLEPQFRDLIIDNFIDQYRQGQTPNPCILCNRLIKFGLLLEQARELGAELLATGHYVRRTVGPDGLCHLRTAANQAKDQSYFLYSLSQQQLRQVIFPLGEIASKDEVRSLATGFGLAVATKGDSQEVCFIPNDDYAAFLEQQGIKASPGNIVHIGGQVLGRHSGTHRYTIGQRKGLGIGWSEPLYVLEIDSSRNLIVVGEQQHLLKAGLIGADISWIIPPPATSFNTTCKIRYRHQPVPCRVELLADDQCRVLFDEAQRSVTPGQFVVFYQDDQVLGGGRIQAACTAEQP.

Residues 7–14 (AMSGGVDS) and M33 contribute to the ATP site. Catalysis depends on C94, which acts as the Nucleophile. Residues C94 and C192 are joined by a disulfide bond. Residue G118 coordinates ATP. The segment at 141 to 143 (KDQ) is interaction with tRNA. The active-site Cysteine persulfide intermediate is C192. Residues 296-297 (RY) are interaction with tRNA.

This sequence belongs to the MnmA/TRMU family.

The protein localises to the cytoplasm. It carries out the reaction S-sulfanyl-L-cysteinyl-[protein] + uridine(34) in tRNA + AH2 + ATP = 2-thiouridine(34) in tRNA + L-cysteinyl-[protein] + A + AMP + diphosphate + H(+). Catalyzes the 2-thiolation of uridine at the wobble position (U34) of tRNA, leading to the formation of s(2)U34. The sequence is that of tRNA-specific 2-thiouridylase MnmA from Trichlorobacter lovleyi (strain ATCC BAA-1151 / DSM 17278 / SZ) (Geobacter lovleyi).